The sequence spans 378 residues: Probable dihydroorotase-like protein (378 aa).

It belongs to the metallo-dependent hydrolases superfamily. DHOase family. PyrC' subfamily.

Non-functional DHOase. The sequence is that of Probable dihydroorotase-like protein (pyrC') from Helicobacter pylori (strain ATCC 700392 / 26695) (Campylobacter pylori).